Reading from the N-terminus, the 137-residue chain is ATP synthase epsilon chain (137 aa).

This sequence belongs to the ATPase epsilon chain family. In terms of assembly, F-type ATPases have 2 components, CF(1) - the catalytic core - and CF(0) - the membrane proton channel. CF(1) has five subunits: alpha(3), beta(3), gamma(1), delta(1), epsilon(1). CF(0) has three main subunits: a, b and c.

The protein localises to the cell inner membrane. Its function is as follows. Produces ATP from ADP in the presence of a proton gradient across the membrane. The chain is ATP synthase epsilon chain from Ruegeria sp. (strain TM1040) (Silicibacter sp.).